A 318-amino-acid chain; its full sequence is tRNA pseudouridine synthase B (318 aa).

D47 acts as the Nucleophile in catalysis.

The protein belongs to the pseudouridine synthase TruB family. Type 1 subfamily.

It catalyses the reaction uridine(55) in tRNA = pseudouridine(55) in tRNA. Its function is as follows. Responsible for synthesis of pseudouridine from uracil-55 in the psi GC loop of transfer RNAs. The sequence is that of tRNA pseudouridine synthase B from Aliivibrio salmonicida (strain LFI1238) (Vibrio salmonicida (strain LFI1238)).